An 854-amino-acid chain; its full sequence is DNA mismatch repair protein MutS (854 aa).

The tract at residues 1-21 (MTASDIQPTEPHTPPTPHADT) is disordered. 658 to 665 (GPNASGKS) contacts ATP.

It belongs to the DNA mismatch repair MutS family.

In terms of biological role, this protein is involved in the repair of mismatches in DNA. It is possible that it carries out the mismatch recognition step. This protein has a weak ATPase activity. The sequence is that of DNA mismatch repair protein MutS from Trichormus variabilis (strain ATCC 29413 / PCC 7937) (Anabaena variabilis).